A 4555-amino-acid polypeptide reads, in one-letter code: Protocadherin Fat 3 (4555 aa).

An N-terminal signal peptide occupies residues Met-1–Gly-31. Over Leu-32–Glu-4153 the chain is Extracellular. Cadherin domains follow at residues Thr-43 to Phe-157, Ser-158 to Ala-262, Pro-263 to Arg-374, Glu-376 to Phe-471, Gln-472 to Phe-577, Glu-578 to Phe-680, Lys-726 to Phe-830, Leu-831 to Phe-935, Ile-936 to Phe-1042, Pro-1043 to Thr-1147, Ser-1148 to Phe-1253, Pro-1254 to Pro-1358, Asp-1362 to Phe-1459, Ser-1460 to Phe-1565, Thr-1566 to Phe-1768, Leu-1769 to Phe-1882, Thr-1883 to Phe-1985, Thr-1982 to Phe-2083, Val-2084 to Phe-2185, Asp-2186 to Phe-2286, Asp-2287 to Phe-2393, Asn-2394 to Phe-2495, Ser-2496 to Phe-2599, Met-2600 to Phe-2707, Thr-2708 to Phe-2813, Glu-2814 to Phe-2923, Ala-2924 to Cys-3028, Asp-3029 to Phe-3130, Ser-3131 to Phe-3235, Glu-3236 to Phe-3340, Ser-3341 to Phe-3445, Thr-3446 to Ala-3550, and Ile-3551 to Phe-3660. Asn-48 is a glycosylation site (N-linked (GlcNAc...) asparagine). Asn-341 carries an N-linked (GlcNAc...) asparagine glycan. N-linked (GlcNAc...) asparagine glycans are attached at residues Asn-481, Asn-562, Asn-667, Asn-799, Asn-879, Asn-898, and Asn-1006. N-linked (GlcNAc...) asparagine glycans are attached at residues Asn-1367 and Asn-1429. Asn-1751 carries N-linked (GlcNAc...) asparagine glycosylation. Residues Asn-1944, Asn-1993, and Asn-1996 are each glycosylated (N-linked (GlcNAc...) asparagine). N-linked (GlcNAc...) asparagine glycans are attached at residues Asn-2208, Asn-2292, Asn-2331, and Asn-2467. Asn-2734 carries N-linked (GlcNAc...) asparagine glycosylation. N-linked (GlcNAc...) asparagine glycosylation occurs at Asn-3000. The N-linked (GlcNAc...) asparagine glycan is linked to Asn-3201. 3 N-linked (GlcNAc...) asparagine glycosylation sites follow: Asn-3449, Asn-3618, and Asn-3741. An EGF-like 1 domain is found at Ser-3794–Ser-3832. Cystine bridges form between Cys-3798/Cys-3809, Cys-3803/Cys-3821, and Cys-3823/Cys-3831. In terms of domain architecture, Laminin G-like spans His-3834 to Cys-4017. Residue Asn-3926 is glycosylated (N-linked (GlcNAc...) asparagine). Intrachain disulfides connect Cys-3984/Cys-4017, Cys-4024/Cys-4035, Cys-4029/Cys-4045, Cys-4047/Cys-4056, Cys-4063/Cys-4074, Cys-4068/Cys-4083, Cys-4085/Cys-4094, Cys-4101/Cys-4112, Cys-4106/Cys-4121, and Cys-4123/Cys-4132. 2 EGF-like domains span residues Tyr-4020–Glu-4057 and Glu-4059–Glu-4095. The 37-residue stretch at Asp-4097–Gly-4133 folds into the EGF-like 4; calcium-binding domain. A helical membrane pass occupies residues Leu-4154–Phe-4174. Over Arg-4175–Val-4555 the chain is Cytoplasmic. Disordered regions lie at residues Ile-4300 to Asp-4353 and Gly-4395 to Pro-4474. Polar residues predominate over residues Cys-4322–Asp-4343. Omega-N-methylarginine is present on residues Arg-4508 and Arg-4518.

As to expression, restricted to the nervous system, mainly in brain. In brain, it is highly expressed in the olfactory bulb and retina. In the developing olfactory bulb, it localizes along the dendrites of these cells as well as in their axons to some extent. In retina, it cocentrates in the inner plexiform layer throughout development (at protein level).

It is found in the membrane. Its function is as follows. May play a role in the interactions between neurites derived from specific subsets of neurons during development. The polypeptide is Protocadherin Fat 3 (Fat3) (Mus musculus (Mouse)).